Here is a 114-residue protein sequence, read N- to C-terminus: Hydrogenase maturation factor HypA (114 aa).

His-2 serves as a coordination point for Ni(2+). 4 residues coordinate Zn(2+): Cys-74, Cys-77, Cys-90, and Cys-93.

It belongs to the HypA/HybF family.

Its function is as follows. Involved in the maturation of [NiFe] hydrogenases. Required for nickel insertion into the metal center of the hydrogenase. The sequence is that of Hydrogenase maturation factor HypA from Campylobacter jejuni subsp. jejuni serotype O:2 (strain ATCC 700819 / NCTC 11168).